A 31-amino-acid polypeptide reads, in one-letter code: Beta-endorphin (31 aa).

The protein belongs to the POMC family.

The protein resides in the secreted. In terms of biological role, beta-endorphin and Met-enkephalin are endogenous opiates. The sequence is that of Beta-endorphin (POMC) from Camelus dromedarius (Dromedary).